The following is a 148-amino-acid chain: Nucleoside diphosphate kinase (148 aa).

Positions 9, 57, 85, 91, 102, and 112 each coordinate ATP. The Pros-phosphohistidine intermediate role is filled by H115.

Belongs to the NDK family. As to quaternary structure, homotetramer. Mg(2+) serves as cofactor.

It localises to the cytoplasm. The catalysed reaction is a 2'-deoxyribonucleoside 5'-diphosphate + ATP = a 2'-deoxyribonucleoside 5'-triphosphate + ADP. It catalyses the reaction a ribonucleoside 5'-diphosphate + ATP = a ribonucleoside 5'-triphosphate + ADP. In terms of biological role, major role in the synthesis of nucleoside triphosphates other than ATP. The ATP gamma phosphate is transferred to the NDP beta phosphate via a ping-pong mechanism, using a phosphorylated active-site intermediate. The sequence is that of Nucleoside diphosphate kinase from Macrococcus caseolyticus (strain JCSC5402) (Macrococcoides caseolyticum).